A 543-amino-acid chain; its full sequence is Chaperonin GroEL (543 aa).

ATP-binding positions include 29 to 32, 86 to 90, Gly413, 476 to 478, and Asp492; these read TLGP, DGTTT, and NAA.

This sequence belongs to the chaperonin (HSP60) family. Forms a cylinder of 14 subunits composed of two heptameric rings stacked back-to-back. Interacts with the co-chaperonin GroES.

It is found in the cytoplasm. The enzyme catalyses ATP + H2O + a folded polypeptide = ADP + phosphate + an unfolded polypeptide.. Functionally, together with its co-chaperonin GroES, plays an essential role in assisting protein folding. The GroEL-GroES system forms a nano-cage that allows encapsulation of the non-native substrate proteins and provides a physical environment optimized to promote and accelerate protein folding. This Streptococcus pyogenes serotype M18 (strain MGAS8232) protein is Chaperonin GroEL.